We begin with the raw amino-acid sequence, 844 residues long: Janus kinase and microtubule-interacting protein 3 (844 aa).

Residues 8-258 (SRAKGDKAEA…QLSQVREADR (251 aa)) adopt a coiled-coil conformation. Residues 250–290 (LSQVREADRHPGSPRRELPHAAGAGDASDHSGSPEQQLDEK) are disordered. The segment covering 254–268 (READRHPGSPRRELP) has biased composition (basic and acidic residues). Low complexity predominate over residues 269–282 (HAAGAGDASDHSGS). Residues 289-421 (EKDARRFQLK…DELSKTLETA (133 aa)) are a coiled coil. Residue Ser-384 is modified to Phosphoserine. Positions 466 to 483 (SDGSSVSYQTDRTDQTPC) are enriched in polar residues. The segment at 466–489 (SDGSSVSYQTDRTDQTPCTPDDDL) is disordered. 2 coiled-coil regions span residues 493–621 (MAKE…RERK) and 683–834 (VLTL…FLFL).

This sequence belongs to the JAKMIP family. As to expression, specifically expressed in the CNS and endocrine tissues. Also detected in other tissues including heart, testis and prostate.

Its subcellular location is the golgi apparatus. The polypeptide is Janus kinase and microtubule-interacting protein 3 (JAKMIP3) (Homo sapiens (Human)).